The sequence spans 222 residues: UPF0758 protein YicR (222 aa).

An MPN domain is found at 100 to 222 (PLLSPEMTRE…YVSFAERGWI (123 aa)). Zn(2+) is bound by residues histidine 171, histidine 173, and aspartate 184. The short motif at 171-184 (HNHPSGCAEPSKAD) is the JAMM motif element.

Belongs to the UPF0758 family. YicR subfamily.

This Shigella dysenteriae serotype 1 (strain Sd197) protein is UPF0758 protein YicR.